A 281-amino-acid chain; its full sequence is 3-mercaptopyruvate sulfurtransferase (281 aa).

Rhodanese domains are found at residues 17–135 and 165–278; these read DDPE…LLEE and HENT…LPVE. Arginine 179 contributes to the substrate binding site. Residue cysteine 238 is the Cysteine persulfide intermediate of the active site. Residues 238–244 are substrate specificity; that stretch reads CGSGVTA.

In terms of assembly, monomer.

Its subcellular location is the cytoplasm. It carries out the reaction 2-oxo-3-sulfanylpropanoate + [thioredoxin]-dithiol = [thioredoxin]-disulfide + hydrogen sulfide + pyruvate + H(+). Functionally, catalyzes the transfer of sulfur from 3-mercaptopyruvate to a thiol-containing acceptor to form an intramolecular disulfide releasing hydrogen sulfide and pyruvate. May be involved in the enhancement of bacterial growth inhibition by serine. In Escherichia coli (strain K12), this protein is 3-mercaptopyruvate sulfurtransferase (sseA).